The primary structure comprises 208 residues: Small ribosomal subunit protein uS5 (208 aa).

The 64-residue stretch at 28–91 (LEERLIYANR…EKAKKNVIRV (64 aa)) folds into the S5 DRBM domain.

It belongs to the universal ribosomal protein uS5 family. As to quaternary structure, part of the 30S ribosomal subunit. Contacts proteins S4 and S8.

Functionally, with S4 and S12 plays an important role in translational accuracy. Its function is as follows. Located at the back of the 30S subunit body where it stabilizes the conformation of the head with respect to the body. The sequence is that of Small ribosomal subunit protein uS5 from Aquifex aeolicus (strain VF5).